The primary structure comprises 386 residues: 3-ketoacyl-CoA thiolase (386 aa).

Cysteine 91 acts as the Acyl-thioester intermediate in catalysis. Catalysis depends on proton acceptor residues histidine 342 and cysteine 372.

Belongs to the thiolase-like superfamily. Thiolase family. Heterotetramer of two alpha chains (FadB) and two beta chains (FadA).

The protein resides in the cytoplasm. It catalyses the reaction an acyl-CoA + acetyl-CoA = a 3-oxoacyl-CoA + CoA. It functions in the pathway lipid metabolism; fatty acid beta-oxidation. Functionally, catalyzes the final step of fatty acid oxidation in which acetyl-CoA is released and the CoA ester of a fatty acid two carbons shorter is formed. The sequence is that of 3-ketoacyl-CoA thiolase from Colwellia psychrerythraea (strain 34H / ATCC BAA-681) (Vibrio psychroerythus).